A 416-amino-acid chain; its full sequence is Serine hydroxymethyltransferase (416 aa).

Residues leucine 118 and 122–124 (GHL) contribute to the (6S)-5,6,7,8-tetrahydrofolate site. Lysine 227 carries the post-translational modification N6-(pyridoxal phosphate)lysine. Residues glutamate 242 and 350–352 (SPF) each bind (6S)-5,6,7,8-tetrahydrofolate.

This sequence belongs to the SHMT family. As to quaternary structure, homodimer. It depends on pyridoxal 5'-phosphate as a cofactor.

The protein localises to the cytoplasm. It catalyses the reaction (6R)-5,10-methylene-5,6,7,8-tetrahydrofolate + glycine + H2O = (6S)-5,6,7,8-tetrahydrofolate + L-serine. The protein operates within one-carbon metabolism; tetrahydrofolate interconversion. It functions in the pathway amino-acid biosynthesis; glycine biosynthesis; glycine from L-serine: step 1/1. Its function is as follows. Catalyzes the reversible interconversion of serine and glycine with tetrahydrofolate (THF) serving as the one-carbon carrier. This reaction serves as the major source of one-carbon groups required for the biosynthesis of purines, thymidylate, methionine, and other important biomolecules. Also exhibits THF-independent aldolase activity toward beta-hydroxyamino acids, producing glycine and aldehydes, via a retro-aldol mechanism. The protein is Serine hydroxymethyltransferase of Syntrophotalea carbinolica (strain DSM 2380 / NBRC 103641 / GraBd1) (Pelobacter carbinolicus).